The primary structure comprises 444 residues: Glutamate--tRNA ligase 1 (444 aa).

Residues 8–18 carry the 'HIGH' region motif; the sequence is PSPTGFLHVGN. The 'KMSKS' region motif lies at 239 to 243; it reads KISKR. K242 contributes to the ATP binding site.

The protein belongs to the class-I aminoacyl-tRNA synthetase family. Glutamate--tRNA ligase type 1 subfamily. In terms of assembly, monomer.

It localises to the cytoplasm. The enzyme catalyses tRNA(Glu) + L-glutamate + ATP = L-glutamyl-tRNA(Glu) + AMP + diphosphate. Functionally, catalyzes the attachment of glutamate to tRNA(Glu) in a two-step reaction: glutamate is first activated by ATP to form Glu-AMP and then transferred to the acceptor end of tRNA(Glu). This chain is Glutamate--tRNA ligase 1, found in Zymomonas mobilis subsp. mobilis (strain ATCC 31821 / ZM4 / CP4).